Consider the following 152-residue polypeptide: SsrA-binding protein (152 aa).

The protein belongs to the SmpB family.

The protein localises to the cytoplasm. Required for rescue of stalled ribosomes mediated by trans-translation. Binds to transfer-messenger RNA (tmRNA), required for stable association of tmRNA with ribosomes. tmRNA and SmpB together mimic tRNA shape, replacing the anticodon stem-loop with SmpB. tmRNA is encoded by the ssrA gene; the 2 termini fold to resemble tRNA(Ala) and it encodes a 'tag peptide', a short internal open reading frame. During trans-translation Ala-aminoacylated tmRNA acts like a tRNA, entering the A-site of stalled ribosomes, displacing the stalled mRNA. The ribosome then switches to translate the ORF on the tmRNA; the nascent peptide is terminated with the 'tag peptide' encoded by the tmRNA and targeted for degradation. The ribosome is freed to recommence translation, which seems to be the essential function of trans-translation. The sequence is that of SsrA-binding protein from Rickettsia rickettsii.